We begin with the raw amino-acid sequence, 886 residues long: Neurotrophin 1 (886 aa).

The N-terminal stretch at 1-29 is a signal peptide; it reads MKAGRAFGCLFWALLYCVLYLDLVSGNSA. A propeptide spanning residues 30–498 is cleaved from the precursor; sequence DDELMDFDFA…FDDFSLSKKR (469 aa). Asn267 and Asn317 each carry an N-linked (GlcNAc...) asparagine glycan. The disordered stretch occupies residues 321–340; it reads FQQPSSQEEEKMASSNGGQS. N-linked (GlcNAc...) asparagine glycosylation occurs at Asn353. The segment at 369 to 436 is disordered; sequence RNSAEETEEP…HKPVVTPPNK (68 aa). The Spaetzle domain maps to 508–597; the sequence is MCQSVVRYAR…KVPTCCSCQV (90 aa). 3 cysteine pairs are disulfide-bonded: Cys509-Cys564, Cys546-Cys593, and Cys553-Cys595. N-linked (GlcNAc...) asparagine glycosylation is present at Asn623. Disordered stretches follow at residues 675–754 and 789–886; these read PGIS…QYHR and VSAP…QSIQ. Positions 698-710 are enriched in low complexity; sequence YKSSSSSSKKYYS. Residues 797-807 show a composition bias toward pro residues; sequence PAPPLPMPPMP. 2 stretches are compositionally biased toward basic residues: residues 815–827 and 874–886; these read HQAH…HHLH and SRRH…QSIQ.

As to quaternary structure, homodimer; disulfide-linked. Detected in the fan-shaped body which is a component of the locomotion center in the central nervous system (CNS) (at protein level). Expressed in the optic lobes and brain.

Its function is as follows. Neurotrophin which may function as a ligand for the Toll-related receptors Toll-7 and Tollo. Binds to Toll-7 and probably acts as its ligand in promoting motor axon targeting and neuronal survival in the central nervous system (CNS). Involved in synaptic targeting of ISNb/d motorneurons and also some SNa motorneurons. In larvae, involved in the negative regulation of the tracheal immune response to bacterial infection perhaps by acting as a ligand for the Toll-related receptor Tollo. May be involved in the normal development of specific neurons at the neuromuscular junction. This chain is Neurotrophin 1, found in Drosophila melanogaster (Fruit fly).